The primary structure comprises 183 residues: MTKQPEDWLDDVPGDDIEDEDDEIIWVSKSEIKRDAEELKRLGAELVDLGKNALDKIPLDADLRDAIELAQRIKMEGRRRQLQLIGKMLRQRDVEPIRQALDKLKNRHNQQVVLFHKLEHLRDRLIVEGDDAVVEVLTLWPHADRQQLRSLIRNAKKEKEGNKPPKSARQIFQYLRELAENEG.

It belongs to the DarP family.

It is found in the cytoplasm. Functionally, member of a network of 50S ribosomal subunit biogenesis factors which assembles along the 30S-50S interface, preventing incorrect 23S rRNA structures from forming. Promotes peptidyl transferase center (PTC) maturation. This Salmonella gallinarum (strain 287/91 / NCTC 13346) protein is Dual-action ribosomal maturation protein DarP.